Consider the following 1047-residue polypeptide: MACSAEAVFAELHALSNFSFLRGASHPKELVAEAARLGYAALALTDECSLAGVVRAHAEAKTLGFKLIIGSEFRLEDGPKLVLLAMDRRGYGQLAAFITLGRRAAEKGEYRLLRGQLETHPLDQCIAIWLPEDAPDDETGAWLARLFPARCWIGVELFLSGGDGLRLSVLQALGERLGLPLVACNDVHMHARERQPLQDTLTAIRLGRPLAELGYALFPNGERHLRPIEFLARIYPRALLEESLRIAERCRFSLDELRYEYPAELVPDGYTAIAWLRELTRQGMAERWPEGAPDKVRRQVEHELELIGAMAYEPFFLTVHDVVRFARSRGILCQGRGSAANSAVCYCLGITEVDPARLDLLFERFISRERNEPPDIDVDFEHERREEVIQYIYRKYGRHRAALAASLITYRVRSAVRDVARALGFSPSRIDTLARVLDRHGVAETLPERLAEAGLASENPAVRRLLALMQMLVGFPRHLSQHVGGFVIAAEDLSHWVPVENAAMPERTVIQWDKDDLESLGLLKVDVLSLGMLTAIRKALAYVGEGRGRPFTLADVPPEDPAVYEMLQRADSIGVFQVESRAQMSMLPRLRPQSYYDLVIQIAIVRPGPIQGDMVHPYLTRRAGLEPVSYPSPAVEKVLKRTLGVPIFQEQVMQLAMVAAGFTPGEADRLRRAMAAWHRKGGLEPFEKKLMDGMRERGYEERFARQIYRQIRGFGEYGFPESHSASFALLAYVSAWLKCHHPAAFACALLNSQPMGFYGPSQLIQDARRHGVEVRPIDVNHSDWDCTLEPTEIPNPLSLWERVGVRALQTGSNPALRLGLRLVNGFSSAAAQRLSDARRQGPFQSIQDLATRVPLDRRELEALAAADALHGLGGHRHRAFWEAAGVEAPTPLYAEPQFAEAEPLLRKPGEAEDVIADYAAAGASLRRHPLSLLRERLDRRGFRTAEALWQVRNGAIARVAGLVVCRQRPMTANGTTFVTIEDETGQINLIVWPATAQAQRRALLRAHLLAVSGTVQQEEGVLHLVAGRLEDIGKWLDGLVVKSRDFQ.

This sequence belongs to the DNA polymerase type-C family. DnaE2 subfamily.

It is found in the cytoplasm. It catalyses the reaction DNA(n) + a 2'-deoxyribonucleoside 5'-triphosphate = DNA(n+1) + diphosphate. Functionally, DNA polymerase involved in damage-induced mutagenesis and translesion synthesis (TLS). It is not the major replicative DNA polymerase. The sequence is that of Error-prone DNA polymerase from Methylococcus capsulatus (strain ATCC 33009 / NCIMB 11132 / Bath).